A 259-amino-acid polypeptide reads, in one-letter code: Phosphatidylglycerol--prolipoprotein diacylglyceryl transferase (259 aa).

4 consecutive transmembrane segments (helical) span residues 12–32 (LAIH…VYLA), 41–61 (ISSD…IVGA), 80–100 (IIAI…GALV), and 109–129 (VLNP…AQAI). Arg-131 lines the a 1,2-diacyl-sn-glycero-3-phospho-(1'-sn-glycerol) pocket. The next 3 helical transmembrane spans lie at 167–187 (IPTF…IMMW), 194–214 (LLDG…RLVI), and 226–246 (GIRI…IFVI).

This sequence belongs to the Lgt family.

It is found in the cell membrane. It carries out the reaction L-cysteinyl-[prolipoprotein] + a 1,2-diacyl-sn-glycero-3-phospho-(1'-sn-glycerol) = an S-1,2-diacyl-sn-glyceryl-L-cysteinyl-[prolipoprotein] + sn-glycerol 1-phosphate + H(+). It participates in protein modification; lipoprotein biosynthesis (diacylglyceryl transfer). Functionally, catalyzes the transfer of the diacylglyceryl group from phosphatidylglycerol to the sulfhydryl group of the N-terminal cysteine of a prolipoprotein, the first step in the formation of mature lipoproteins. This Streptococcus pyogenes serotype M3 (strain ATCC BAA-595 / MGAS315) protein is Phosphatidylglycerol--prolipoprotein diacylglyceryl transferase.